Consider the following 777-residue polypeptide: ATPase ARSA1 (777 aa).

Position 110 to 117 (110 to 117) interacts with ATP; it reads KGGVGKTS. The active site involves D139. ATP contacts are provided by residues N372 and 454-461; that span reads KGGVGKTS. The active site involves D483. Residue N712 coordinates ATP.

This sequence belongs to the arsA ATPase family. In terms of assembly, monomer. Interacts with TOC34.

It is found in the cytoplasm. The protein localises to the cytosol. ATPase required for the post-translational delivery of tail-anchored (TA) proteins to the chloroplast. Required for the accumulation of TOC34, an essential component of the outer chloroplast membrane translocon (TOC) complex. Recognizes and selectively binds the transmembrane domain of TA proteins in the cytosol. This complex then targets to chloroplast, where the tail-anchored protein is released for insertion. This process is regulated by ATP binding and hydrolysis. The sequence is that of ATPase ARSA1 from Chlamydomonas reinhardtii (Chlamydomonas smithii).